The chain runs to 1076 residues: DNA-directed RNA polymerase subunit beta (1076 aa).

The protein belongs to the RNA polymerase beta chain family. As to quaternary structure, in plastids the minimal PEP RNA polymerase catalytic core is composed of four subunits: alpha, beta, beta', and beta''. When a (nuclear-encoded) sigma factor is associated with the core the holoenzyme is formed, which can initiate transcription.

The protein localises to the plastid. The protein resides in the chloroplast. The enzyme catalyses RNA(n) + a ribonucleoside 5'-triphosphate = RNA(n+1) + diphosphate. DNA-dependent RNA polymerase catalyzes the transcription of DNA into RNA using the four ribonucleoside triphosphates as substrates. This chain is DNA-directed RNA polymerase subunit beta, found in Triticum aestivum (Wheat).